The chain runs to 80 residues: Conotoxin VnMSGL-0121 (80 aa).

The signal sequence occupies residues 1–20; that stretch reads MSGLGIMVLTLLLLVSMATS. Residues 21 to 44 constitute a propeptide that is removed on maturation; the sequence is HQDGGGKQATQRDAINVRRRRSIT. Disulfide bonds link Cys52-Cys65, Cys56-Cys74, and Cys64-Cys78. Phe79 bears the Phenylalanine amide mark.

The protein belongs to the conotoxin O3 superfamily. Expressed by the venom duct.

The protein resides in the secreted. The sequence is that of Conotoxin VnMSGL-0121 from Conus ventricosus (Mediterranean cone).